The sequence spans 88 residues: Small ribosomal subunit protein uS19 (88 aa).

This sequence belongs to the universal ribosomal protein uS19 family.

Its function is as follows. Protein S19 forms a complex with S13 that binds strongly to the 16S ribosomal RNA. The chain is Small ribosomal subunit protein uS19 from Ureaplasma parvum serovar 3 (strain ATCC 27815 / 27 / NCTC 11736).